The following is a 151-amino-acid chain: UPF0208 membrane protein YfbV (151 aa).

Transmembrane regions (helical) follow at residues 46–65 (YAIR…QIAL) and 69–91 (LGPA…WWLG).

This sequence belongs to the UPF0208 family.

Its subcellular location is the cell inner membrane. In Shigella flexneri serotype 5b (strain 8401), this protein is UPF0208 membrane protein YfbV.